A 118-amino-acid polypeptide reads, in one-letter code: Putative pterin-4-alpha-carbinolamine dehydratase (118 aa).

It belongs to the pterin-4-alpha-carbinolamine dehydratase family.

It carries out the reaction (4aS,6R)-4a-hydroxy-L-erythro-5,6,7,8-tetrahydrobiopterin = (6R)-L-erythro-6,7-dihydrobiopterin + H2O. In Xanthomonas oryzae pv. oryzae (strain MAFF 311018), this protein is Putative pterin-4-alpha-carbinolamine dehydratase.